The primary structure comprises 530 residues: Chaperonin GroEL, chloroplastic (530 aa).

Residues 29 to 32 (TLGP), 86 to 90 (DGTTT), Gly414, 480 to 482 (DAL), and Asp496 contribute to the ATP site.

It belongs to the chaperonin (HSP60) family. In terms of assembly, forms a cylinder of 14 subunits composed of two heptameric rings stacked back-to-back. Interacts with the co-chaperonin GroES.

It is found in the plastid. The protein localises to the chloroplast. It carries out the reaction ATP + H2O + a folded polypeptide = ADP + phosphate + an unfolded polypeptide.. In terms of biological role, together with its co-chaperonin GroES, plays an essential role in assisting protein folding. The GroEL-GroES system forms a nano-cage that allows encapsulation of the non-native substrate proteins and provides a physical environment optimized to promote and accelerate protein folding. The sequence is that of Chaperonin GroEL, chloroplastic from Cyanidium caldarium (Red alga).